Here is a 475-residue protein sequence, read N- to C-terminus: Aminodeoxychorismate synthase component 1 (475 aa).

It belongs to the anthranilate synthase component I family. In terms of assembly, monomer. Heterodimer consisting of two non-identical subunits: a glutamine amidotransferase subunit (PabA) and a aminodeoxychorismate synthase subunit (PabB). Mg(2+) serves as cofactor.

The enzyme catalyses chorismate + L-glutamine = 4-amino-4-deoxychorismate + L-glutamate. Its pathway is cofactor biosynthesis; tetrahydrofolate biosynthesis; 4-aminobenzoate from chorismate: step 1/2. Its function is as follows. Part of a heterodimeric complex that catalyzes the two-step biosynthesis of 4-amino-4-deoxychorismate (ADC), a precursor of p-aminobenzoate (PABA) and tetrahydrofolate. In the first step, a glutamine amidotransferase (PabA) generates ammonia as a substrate that, along with chorismate, is used in the second step, catalyzed by aminodeoxychorismate synthase (PabB) to produce ADC. This is Aminodeoxychorismate synthase component 1 (pabB) from Streptomyces lividans.